The primary structure comprises 2181 residues: Non-reducing polyketide synthase dpmaA (2181 aa).

The N-terminal acylcarrier protein transacylase domain (SAT) stretch occupies residues glutamine 74–aspartate 180. The 433-residue stretch at glutamine 347 to glutamine 779 folds into the Ketosynthase family 3 (KS3) domain. Catalysis depends on for beta-ketoacyl synthase activity residues cysteine 525, histidine 661, and histidine 702. A malonyl-CoA:ACP transacylase (MAT) domain region spans residues valine 891–proline 1193. Serine 977 serves as the catalytic For acyl/malonyl transferase activity. The segment at valine 1269–serine 1401 is N-terminal hotdog fold. Residues valine 1269–lysine 1579 enclose the PKS/mFAS DH domain. A product template (PT) domain region spans residues glutamine 1276 to isoleucine 1573. The segment at serine 1425–lysine 1579 is C-terminal hotdog fold. Residues glycine 1587–glutamate 1603 are compositionally biased toward polar residues. Disordered regions lie at residues glycine 1587–glycine 1618 and isoleucine 1652–threonine 1675. The span at serine 1653–serine 1670 shows a compositional bias: low complexity. One can recognise a Carrier domain in the interval glutamate 1677–glutamine 1753. Residue serine 1713 is modified to O-(pantetheine 4'-phosphoryl)serine. Residues glutamate 1982–threonine 2164 form a methyltransferase (CMeT) domain region.

It participates in secondary metabolite biosynthesis; terpenoid biosynthesis. In terms of biological role, non-reducing polyketide synthase; part of the gene cluster that mediates the biosynthesis of the diterpenoid pyrones subglutinols A and B. The first step of the pathway is the synthesis of the alpha-pyrone moiety by the polyketide synthase dpmaA via condensation of one acetyl-CoA starter unit with 3 malonyl-CoA units and 2 methylations. The alpha-pyrone is then combined with geranylgeranyl pyrophosphate (GGPP) formed by the GGPP synthase dpmaD through the action of the prenyltransferase dpmaC to yield a linear alpha-pyrone diterpenoid. Subsequent steps in the diterpenoid pyrone biosynthetic pathway involve the decalin core formation, which is initiated by the epoxidation of the C10-C11 olefin by the FAD-dependent oxidoreductase dpmaE, and is followed by a cyclization cascade catalyzed by the terpene cyclase dpmaB. The dehydrogenase dpmaF is then involved in tetrahydrofuran (THF) ring formation at the C5 unit to complete the formation of subglutinols A and B. The chain is Non-reducing polyketide synthase dpmaA from Metarhizium anisopliae (Entomophthora anisopliae).